The following is a 294-amino-acid chain: Proteasome subunit beta 1 (294 aa).

The propeptide at 1–65 (MTADRPALRT…MESGDLAPHG (65 aa)) is removed in mature form; by autocatalysis. Thr66 acts as the Nucleophile in catalysis.

This sequence belongs to the peptidase T1B family. As to quaternary structure, the 20S proteasome core is composed of 14 alpha and 14 beta subunits that assemble into four stacked heptameric rings, resulting in a barrel-shaped structure. The two inner rings, each composed of seven catalytic beta subunits, are sandwiched by two outer rings, each composed of seven alpha subunits. All four combinations of alpha- and beta-subunits (beta2-alpha1, beta2-alpha2, beta1-alpha2 and beta1-alpha1) yield fully assembled and proteolytically active proteasomes. The catalytic chamber with the active sites is on the inside of the barrel. Has probably a gated structure, the ends of the cylinder being occluded by the N-termini of the alpha-subunits. Is likely capped by the proteasome-associated ATPase, ARC.

The protein localises to the cytoplasm. It catalyses the reaction Cleavage of peptide bonds with very broad specificity.. It functions in the pathway protein degradation; proteasomal Pup-dependent pathway. Its activity is regulated as follows. The formation of the proteasomal ATPase ARC-20S proteasome complex, likely via the docking of the C-termini of ARC into the intersubunit pockets in the alpha-rings, may trigger opening of the gate for substrate entry. Interconversion between the open-gate and close-gate conformations leads to a dynamic regulation of the 20S proteasome proteolysis activity. Its function is as follows. Component of the proteasome core, a large protease complex with broad specificity involved in protein degradation. The R.erythropolis proteasomes are able to cleave oligopeptides after Tyr, Phe and Leu, very poorly after Arg but not after Glu. Thus, displays chymotrypsin-like activity, low trypsin-like activity but no caspase-like activity. In Rhodococcus erythropolis (Arthrobacter picolinophilus), this protein is Proteasome subunit beta 1.